Reading from the N-terminus, the 253-residue chain is 1-(5-phosphoribosyl)-5-[(5-phosphoribosylamino)methylideneamino] imidazole-4-carboxamide isomerase (253 aa).

Aspartate 8 (proton acceptor) is an active-site residue. The active-site Proton donor is aspartate 131.

This sequence belongs to the HisA/HisF family.

The protein localises to the cytoplasm. The enzyme catalyses 1-(5-phospho-beta-D-ribosyl)-5-[(5-phospho-beta-D-ribosylamino)methylideneamino]imidazole-4-carboxamide = 5-[(5-phospho-1-deoxy-D-ribulos-1-ylimino)methylamino]-1-(5-phospho-beta-D-ribosyl)imidazole-4-carboxamide. Its pathway is amino-acid biosynthesis; L-histidine biosynthesis; L-histidine from 5-phospho-alpha-D-ribose 1-diphosphate: step 4/9. The chain is 1-(5-phosphoribosyl)-5-[(5-phosphoribosylamino)methylideneamino] imidazole-4-carboxamide isomerase from Polynucleobacter necessarius subsp. necessarius (strain STIR1).